Here is a 539-residue protein sequence, read N- to C-terminus: 2-isopropylmalate synthase (539 aa).

One can recognise a Pyruvate carboxyltransferase domain in the interval 8 to 269; the sequence is VLIFDTTLRD…YFNPFFGRPP (262 aa). Positions 17, 208, 210, and 244 each coordinate Mn(2+). The regulatory domain stretch occupies residues 408–539; it reads QLKLVQVSCG…DLAKVDKKGI (132 aa).

Belongs to the alpha-IPM synthase/homocitrate synthase family. LeuA type 1 subfamily. In terms of assembly, homodimer. Mn(2+) is required as a cofactor.

It is found in the cytoplasm. It catalyses the reaction 3-methyl-2-oxobutanoate + acetyl-CoA + H2O = (2S)-2-isopropylmalate + CoA + H(+). It participates in amino-acid biosynthesis; L-leucine biosynthesis; L-leucine from 3-methyl-2-oxobutanoate: step 1/4. Functionally, catalyzes the condensation of the acetyl group of acetyl-CoA with 3-methyl-2-oxobutanoate (2-ketoisovalerate) to form 3-carboxy-3-hydroxy-4-methylpentanoate (2-isopropylmalate). In Prochlorococcus marinus (strain NATL1A), this protein is 2-isopropylmalate synthase.